The sequence spans 52 residues: ATP synthase protein 8 (52 aa).

The helical transmembrane segment at 7–27 (MKWFLIYFIYLLIFYLFIMLI) threads the bilayer.

It belongs to the ATPase protein 8 family. In terms of assembly, F-type ATPases have 2 components, CF(1) - the catalytic core - and CF(0) - the membrane proton channel.

It is found in the mitochondrion membrane. In terms of biological role, mitochondrial membrane ATP synthase (F(1)F(0) ATP synthase or Complex V) produces ATP from ADP in the presence of a proton gradient across the membrane which is generated by electron transport complexes of the respiratory chain. F-type ATPases consist of two structural domains, F(1) - containing the extramembraneous catalytic core and F(0) - containing the membrane proton channel, linked together by a central stalk and a peripheral stalk. During catalysis, ATP synthesis in the catalytic domain of F(1) is coupled via a rotary mechanism of the central stalk subunits to proton translocation. Part of the complex F(0) domain. Minor subunit located with subunit a in the membrane. This Apis mellifera ligustica (Common honeybee) protein is ATP synthase protein 8 (mt:ATPase8).